A 152-amino-acid chain; its full sequence is Nucleoside diphosphate kinase (152 aa).

ATP-binding residues include lysine 11, phenylalanine 59, arginine 87, threonine 93, arginine 104, and asparagine 114. Histidine 117 (pros-phosphohistidine intermediate) is an active-site residue.

The protein belongs to the NDK family. In terms of assembly, homotetramer. Mg(2+) is required as a cofactor.

It localises to the cytoplasm. The catalysed reaction is a 2'-deoxyribonucleoside 5'-diphosphate + ATP = a 2'-deoxyribonucleoside 5'-triphosphate + ADP. The enzyme catalyses a ribonucleoside 5'-diphosphate + ATP = a ribonucleoside 5'-triphosphate + ADP. Functionally, major role in the synthesis of nucleoside triphosphates other than ATP. The ATP gamma phosphate is transferred to the NDP beta phosphate via a ping-pong mechanism, using a phosphorylated active-site intermediate. This Prochlorococcus marinus (strain MIT 9215) protein is Nucleoside diphosphate kinase.